Here is a 448-residue protein sequence, read N- to C-terminus: Trigger factor (448 aa).

In terms of domain architecture, PPIase FKBP-type spans 167–253 (GSIVRVDFVE…IKDIKKRDIP (87 aa)).

This sequence belongs to the FKBP-type PPIase family. Tig subfamily.

The protein localises to the cytoplasm. The enzyme catalyses [protein]-peptidylproline (omega=180) = [protein]-peptidylproline (omega=0). In terms of biological role, involved in protein export. Acts as a chaperone by maintaining the newly synthesized protein in an open conformation. Functions as a peptidyl-prolyl cis-trans isomerase. This Borrelia hermsii (strain HS1 / DAH) protein is Trigger factor.